A 414-amino-acid polypeptide reads, in one-letter code: 5-aminolevulinate synthase (414 aa).

The substrate site is built by arginine 22, serine 133, and lysine 152. Pyridoxal 5'-phosphate is bound by residues serine 185, histidine 213, and threonine 241. Residue lysine 244 is part of the active site. Lysine 244 is modified (N6-(pyridoxal phosphate)lysine). Pyridoxal 5'-phosphate-binding residues include threonine 273 and threonine 274. Threonine 359 contributes to the substrate binding site.

This sequence belongs to the class-II pyridoxal-phosphate-dependent aminotransferase family. As to quaternary structure, homodimer. Pyridoxal 5'-phosphate is required as a cofactor.

The enzyme catalyses succinyl-CoA + glycine + H(+) = 5-aminolevulinate + CO2 + CoA. Its pathway is porphyrin-containing compound metabolism; protoporphyrin-IX biosynthesis; 5-aminolevulinate from glycine: step 1/1. The chain is 5-aminolevulinate synthase (hemA) from Rickettsia prowazekii (strain Madrid E).